The primary structure comprises 255 residues: 3-dehydroquinate dehydratase (255 aa).

Residues 47 to 49 (EWR) and Arg83 each bind 3-dehydroquinate. Residue His144 is the Proton donor/acceptor of the active site. The active-site Schiff-base intermediate with substrate is Lys171. Residues Arg214, Ser233, and Gln237 each coordinate 3-dehydroquinate.

The protein belongs to the type-I 3-dehydroquinase family. As to quaternary structure, homodimer.

It carries out the reaction 3-dehydroquinate = 3-dehydroshikimate + H2O. The protein operates within metabolic intermediate biosynthesis; chorismate biosynthesis; chorismate from D-erythrose 4-phosphate and phosphoenolpyruvate: step 3/7. Involved in the third step of the chorismate pathway, which leads to the biosynthesis of aromatic amino acids. Catalyzes the cis-dehydration of 3-dehydroquinate (DHQ) and introduces the first double bond of the aromatic ring to yield 3-dehydroshikimate. In Alkaliphilus oremlandii (strain OhILAs) (Clostridium oremlandii (strain OhILAs)), this protein is 3-dehydroquinate dehydratase.